Reading from the N-terminus, the 360-residue chain is Protein phosphatase methylesterase 1 (360 aa).

The disordered stretch occupies residues 26 to 50; that stretch reads DEDDIPEPAVMPPTGNSSSTANTED. Residues serine 167, aspartate 192, and histidine 316 contribute to the active site.

This sequence belongs to the AB hydrolase superfamily.

It carries out the reaction [phosphatase 2A protein]-C-terminal L-leucine methyl ester + H2O = [phosphatase 2A protein]-C-terminal L-leucine + methanol + H(+). Its function is as follows. Demethylates proteins that have been reversibly carboxymethylated. Demethylates the phosphatase PP2A catalytic subunit. Involved in the regulation of filamentous growth. The polypeptide is Protein phosphatase methylesterase 1 (PPE1) (Candida albicans (strain SC5314 / ATCC MYA-2876) (Yeast)).